The primary structure comprises 376 residues: 1-deoxy-D-xylulose 5-phosphate reductoisomerase (376 aa).

Ser-10, Gly-11, Ser-12, Val-13, Gly-36, Lys-37, Asn-38, and Asn-118 together coordinate NADPH. Position 119 (Lys-119) interacts with 1-deoxy-D-xylulose 5-phosphate. Glu-120 lines the NADPH pocket. Asp-144 provides a ligand contact to Mn(2+). Residues Ser-145, Glu-146, Ser-170, and His-193 each coordinate 1-deoxy-D-xylulose 5-phosphate. A Mn(2+)-binding site is contributed by Glu-146. Gly-199 is an NADPH binding site. 1-deoxy-D-xylulose 5-phosphate-binding residues include Ser-206, Asn-211, Lys-212, and Glu-215. Mn(2+) is bound at residue Glu-215.

This sequence belongs to the DXR family. Mg(2+) is required as a cofactor. Mn(2+) serves as cofactor.

It carries out the reaction 2-C-methyl-D-erythritol 4-phosphate + NADP(+) = 1-deoxy-D-xylulose 5-phosphate + NADPH + H(+). Its pathway is isoprenoid biosynthesis; isopentenyl diphosphate biosynthesis via DXP pathway; isopentenyl diphosphate from 1-deoxy-D-xylulose 5-phosphate: step 1/6. Its function is as follows. Catalyzes the NADPH-dependent rearrangement and reduction of 1-deoxy-D-xylulose-5-phosphate (DXP) to 2-C-methyl-D-erythritol 4-phosphate (MEP). This Macrococcus caseolyticus (strain JCSC5402) (Macrococcoides caseolyticum) protein is 1-deoxy-D-xylulose 5-phosphate reductoisomerase.